We begin with the raw amino-acid sequence, 267 residues long: Methyl-coenzyme M reductase II subunit gamma (267 aa).

Arg-123 lines the coenzyme M pocket.

It belongs to the methyl-coenzyme M reductase gamma subunit family. As to quaternary structure, MCR is a hexamer of two alpha, two beta, and two gamma chains, forming a dimer of heterotrimers. Requires coenzyme F430 as cofactor.

It catalyses the reaction coenzyme B + methyl-coenzyme M = methane + coenzyme M-coenzyme B heterodisulfide. Its pathway is one-carbon metabolism; methyl-coenzyme M reduction; methane from methyl-coenzyme M: step 1/1. Its function is as follows. Component of the methyl-coenzyme M reductase (MCR) I that catalyzes the reductive cleavage of methyl-coenzyme M (CoM-S-CH3 or 2-(methylthio)ethanesulfonate) using coenzyme B (CoB or 7-mercaptoheptanoylthreonine phosphate) as reductant which results in the production of methane and the mixed heterodisulfide of CoB and CoM (CoM-S-S-CoB). This is the final step in methanogenesis. The polypeptide is Methyl-coenzyme M reductase II subunit gamma (mrtG) (Methanothermus fervidus (strain ATCC 43054 / DSM 2088 / JCM 10308 / V24 S)).